Consider the following 1513-residue polypeptide: Mucin-2 (1513 aa).

Positions 1-20 (MGLPLARLVAVCLVLALAKG) are cleaved as a signal peptide. The VWFD 1 domain maps to 32–204 (HVCSTWGDFH…KINKPEVVCE (173 aa)). 28 disulfides stabilise this stretch: cysteine 34–cysteine 166, cysteine 56–cysteine 203, cysteine 64–cysteine 163, cysteine 215–cysteine 252, cysteine 222–cysteine 247, cysteine 234–cysteine 272, cysteine 254–cysteine 260, cysteine 262–cysteine 288, cysteine 292–cysteine 326, cysteine 309–cysteine 348, cysteine 328–cysteine 342, cysteine 350–cysteine 372, cysteine 367–cysteine 384, cysteine 370–cysteine 379, cysteine 388–cysteine 525, cysteine 410–cysteine 560, cysteine 432–cysteine 440, cysteine 571–cysteine 616, cysteine 585–cysteine 611, cysteine 598–cysteine 636, cysteine 618–cysteine 624, cysteine 626–cysteine 651, cysteine 658–cysteine 695, cysteine 671–cysteine 685, cysteine 675–cysteine 715, cysteine 697–cysteine 709, cysteine 717–cysteine 739, and cysteine 737–cysteine 746. Aspartate 46 contacts Ca(2+). Residues methionine 143 and methionine 151 each coordinate Cu(+). Glutamate 153 is a Cu(2+) binding site. Asparagine 160 carries N-linked (GlcNAc...) asparagine glycosylation. Ca(2+) is bound by residues aspartate 168, asparagine 170, and glutamate 177. Residues histidine 274 and histidine 321 each contribute to the Cu(2+) site. The region spanning 292 to 348 (CPGNMVYLESGSPWLDTCSHLEVSSLCEEHYMDGCFCPEGTVYDDITGSGCIPVSQC) is the TIL domain. Residue methionine 323 participates in Cu(+) binding. Residues 350–410 (CKLHGHLYMP…GKKFTFHGDC (61 aa)) enclose the VWFC domain. The VWFD 2 domain occupies 386–561 (ETCALEGGSH…NTWKAQSSCH (176 aa)). Aspartate 400 provides a ligand contact to Ca(2+). Residue asparagine 420 is glycosylated (N-linked (GlcNAc...) asparagine). Asparagine 527, asparagine 529, leucine 531, aspartate 534, and aspartate 535 together coordinate Ca(2+). Asparagine 667 carries an N-linked (GlcNAc...) asparagine glycan. The N-linked (GlcNAc...) asparagine glycan is linked to asparagine 767. 21 disulfides stabilise this stretch: cysteine 781–cysteine 817, cysteine 799–cysteine 811, cysteine 819–cysteine 842, cysteine 836–cysteine 854, cysteine 840–cysteine 849, cysteine 858–cysteine 989, cysteine 880–cysteine 1024, cysteine 889–cysteine 986, cysteine 906–cysteine 913, cysteine 1034–cysteine 1077, cysteine 1048–cysteine 1072, cysteine 1059–cysteine 1099, cysteine 1079–cysteine 1087, cysteine 1089–cysteine 1114, cysteine 1105–cysteine 1134, cysteine 1118–cysteine 1160, cysteine 1142–cysteine 1184, cysteine 1164–cysteine 1178, cysteine 1186–cysteine 1210, cysteine 1205–cysteine 1235, and cysteine 1208–cysteine 1218. N-linked (GlcNAc...) asparagine glycosylation is present at asparagine 837. The 170-residue stretch at 856–1025 (STCSIYGSGH…NSWKEASTCP (170 aa)) folds into the VWFD 3 domain. Residue aspartate 870 participates in Ca(2+) binding. Asparagine 892 is a glycosylation site (N-linked (GlcNAc...) asparagine). 4 residues coordinate Ca(2+): asparagine 991, aspartate 993, asparagine 998, and aspartate 999. N-linked (GlcNAc...) asparagine glycosylation is found at asparagine 1136 and asparagine 1151. N-linked (GlcNAc...) asparagine glycosylation is found at asparagine 1212, asparagine 1227, and asparagine 1243. O-linked (GalNAc) threonine glycans are attached at residues threonine 1264, threonine 1267, threonine 1268, and threonine 1280. An O-linked (GalNAc) serine glycan is attached at serine 1286. The O-linked (GalNAc) threonine glycan is linked to threonine 1290. Ca(2+) contacts are provided by asparagine 1303, histidine 1306, serine 1309, glycine 1313, aspartate 1314, and glutamate 1316. Asparagine 1350 carries an N-linked (GlcNAc...) asparagine glycan. 2 residues coordinate Ca(2+): aspartate 1373 and tyrosine 1374. A run of 11 repeats spans residues 1392–1407 (SPTTSTPISSTPQPTS), 1408–1423 (SPTTLPTTSPLTSSAT), 1424–1434 (SPTTSHITSTV), 1435–1445 (SPTTSPTTSTT), 1446–1456 (SPTTSPTTSTT), 1457–1467 (SPTTSTTSPTP), 1468–1478 (SPTTSTTSPTP), 1479–1489 (SPTTSTTSPTP), 1490–1500 (SPTTSTTSPTT), 1501–1511 (SPITSPTTSTT), and 1512–1513 (SP). The approximate repeats stretch occupies residues 1392-1513 (SPTTSTPISS…TSPTTSTTSP (122 aa)). The interval 1392 to 1513 (SPTTSTPISS…TSPTTSTTSP (122 aa)) is disordered.

Homomultimer; disulfide-linked. The N- and C-terminus mediate their assembly into higher order structures to form filaments. The CTCK domains of two polypeptides associate in the endoplasmic reticulum to generate intermolecularly disulfide-bonded dimers. These dimers progress to the Golgi apparatus, which is a more acidic environment than the endoplasmic reticulum. Under acidic conditions, the N-termini form non-covalent intermolecular interactions that juxtapose assemblies of the third VWD domain (VWD3) from different CTCK-linked dimers. The VWD3 assemblies then become disulfide bonded to one another to produce long, disulfide-linked polymers that remain highly compact until secretion. Interacts with FCGBP. Interacts with AGR2; disulfide-linked. Post-translationally, O-glycosylated. O-glycosylation is required for mucin assembly. Goblet cells synthesize two forms of mucin that differ in branched chain O-glycosylation and the site of production in the colon. May undergo proteolytic cleavage in the outer mucus layer of the colon, contributing to the expanded volume and loose nature of this layer which allows for bacterial colonization in contrast to the inner mucus layer which is dense and devoid of bacteria. In terms of processing, at low pH of 6 and under, undergoes autocatalytic cleavage in vitro in the N-terminal region of the fourth VWD domain. It is likely that this also occurs in vivo and is triggered by the low pH of the late secretory pathway. Expressed in intestine and airway.

The protein resides in the secreted. Its function is as follows. Coats the epithelia of the intestines and other mucus membrane-containing organs to provide a protective, lubricating barrier against particles and infectious agents at mucosal surfaces. Major constituent of the colon mucus, which is mainly formed by large polymeric networks of MUC2 secreted by goblet cells that cover the exposed surfaces of intestine. MUC2 networks form hydrogels that guard the underlying epithelium from pathogens and other hazardous matter entering from the outside world, while permitting nutrient absorption and gas exchange. Acts as a divalent copper chaperone that protects intestinal cells from copper toxicity and facilitates nutritional copper unptake into cells. Binds both Cu(2+) and its reduced form, Cu(1+), at two juxtaposed binding sites: Cu(2+), once reduced to Cu(1+) by vitamin C (ascorbate) or other dietary antioxidants, transits to the other binding site. MUC2-bound Cu(1+) is protected from oxidation in aerobic environments, and can be released for nutritional delivery to cells. Mucin gels store antimicrobial molecules that participate in innate immunity. Mucin glycoproteins also house and feed the microbiome, lubricate tissue surfaces, and may facilitate the removal of contaminants and waste products from the body. Goblet cells synthesize two forms of MUC2 mucin that differ in branched chain O-glycosylation and the site of production in the colon: a (1) 'thick' mucus that wraps the microbiota to form fecal pellets is produced in the proximal, ascending colon. 'Thick' mucus transits along the descending colon and is lubricated by a (2) 'thin' MUC2 mucus produced in the distal colon which adheres to the 'thick' mucus. This Rattus norvegicus (Rat) protein is Mucin-2.